Reading from the N-terminus, the 450-residue chain is UDP-N-acetylmuramoylalanine--D-glutamate ligase (450 aa).

119–125 (GSNGKTT) is a binding site for ATP.

It belongs to the MurCDEF family.

Its subcellular location is the cytoplasm. The enzyme catalyses UDP-N-acetyl-alpha-D-muramoyl-L-alanine + D-glutamate + ATP = UDP-N-acetyl-alpha-D-muramoyl-L-alanyl-D-glutamate + ADP + phosphate + H(+). It participates in cell wall biogenesis; peptidoglycan biosynthesis. Its function is as follows. Cell wall formation. Catalyzes the addition of glutamate to the nucleotide precursor UDP-N-acetylmuramoyl-L-alanine (UMA). This is UDP-N-acetylmuramoylalanine--D-glutamate ligase from Bacillus thuringiensis (strain Al Hakam).